Consider the following 436-residue polypeptide: Adenosylmethionine-8-amino-7-oxononanoate aminotransferase (436 aa).

Tryptophan 66 is a substrate binding site. 126–127 (GS) is a binding site for pyridoxal 5'-phosphate. Tyrosine 159 is a binding site for substrate. Aspartate 256 serves as a coordination point for pyridoxal 5'-phosphate. Substrate is bound by residues lysine 285 and glycine 318. At lysine 285 the chain carries N6-(pyridoxal phosphate)lysine. Position 319-320 (319-320 (PT)) interacts with pyridoxal 5'-phosphate. Arginine 402 contributes to the substrate binding site.

This sequence belongs to the class-III pyridoxal-phosphate-dependent aminotransferase family. BioA subfamily. Homodimer. The cofactor is pyridoxal 5'-phosphate.

The protein resides in the cytoplasm. It carries out the reaction (8S)-8-amino-7-oxononanoate + S-adenosyl-L-methionine = S-adenosyl-4-methylsulfanyl-2-oxobutanoate + (7R,8S)-7,8-diammoniononanoate. The protein operates within cofactor biosynthesis; biotin biosynthesis; 7,8-diaminononanoate from 8-amino-7-oxononanoate (SAM route): step 1/1. Functionally, catalyzes the transfer of the alpha-amino group from S-adenosyl-L-methionine (SAM) to 7-keto-8-aminopelargonic acid (KAPA) to form 7,8-diaminopelargonic acid (DAPA). It is the only aminotransferase known to utilize SAM as an amino donor. The protein is Adenosylmethionine-8-amino-7-oxononanoate aminotransferase of Mycobacterium leprae (strain TN).